The chain runs to 869 residues: MSGRDNRGAGGGGGGHQPLSSAMGKLKEKLTRAGDDQGYHRVESNLSTSNTATSLDTILPEDPFLFPQAAPQRHPLPRPQQQQQQQQRQQLRLLEDEPPLSFRPLLEDDDINEPPTQPFQQQQQRTPLRASGSLELTPLPPPPTSQEIREHRDRQQRSVPVPVEDLQRSKQSLKGSRVSFEKNNASSKPPAQAESSDEDSFEDKRIGFQQQKATSVDHKGILKDLKHILANDNRRQFQAKKHVSLDVKGTRFLQDLLKESSSEEEFHKTRREFQGRKHQSLDPRVTFKLDKVLQGSSTDSDEEGDDPEHKRLIHRPKDITKPLIIDLKDLESESDEDFHTSRQHFQQQRSISTDSRKSRRPYEMDEMGNKRGENIRHAVPFVRQITEDGKPKLEVYRPTTNPIYIWTQVLAALSVSLGSLVVGFVSAYTSPALVSMTNRNMTSFEVTPQAASWVGGIMPLAGLAGGIAGGPFIEYLGRRNTILATAIPFIVSSLLIACAVNVAMVLAGRFLAGFCVGIASLSLPVYLGETVQPEVRGTLGLLPTAFGNIGILLCFVAGTYMDWSMLAFLGAALPVPFLILMFLIPETPRWFVSRGREEKARKALSWLRGKEADVEPELKGLMRSQADADRQATQNKMMELLKRNNLKPLSISLGLMFFQQLSGINAVIFYTVSIFKDAGSTIDGNLCTIIVGIVNFMATFIATLLIDRAGRKILLYVSNIAMIITLFVLGGFFYCKSHGQDVSQLGWLPLSCFVIYILGFSLGFGPIPWLMMGEILPSKIRGSAASVATAFNWSCTFVVTKTFQDMIDFMGAHGAFWLFGSICFIGLFFVILYVPETQGKTLEDIERKMMGRVRRMSSVANMKPLAFNM.

Disordered regions lie at residues 1–214 (MSGR…QKAT) and 258–315 (KESS…LIHR). Over 1-404 (MSGRDNRGAG…VYRPTTNPIY (404 aa)) the chain is Cytoplasmic. Residues 25–43 (KLKEKLTRAGDDQGYHRVE) are compositionally biased toward basic and acidic residues. Low complexity-rich tracts occupy residues 44 to 57 (SNLSTSNTATSLDT), 79 to 92 (PQQQQQQQQRQQLR), and 118 to 127 (PFQQQQQRTP). 2 stretches are compositionally biased toward basic and acidic residues: residues 147 to 156 (EIREHRDRQQ) and 258 to 291 (KESSSEEEFHKTRREFQGRKHQSLDPRVTFKLDK). Phosphoserine is present on residues Ser260, Ser261, Ser262, Ser332, and Ser334. A disordered region spans residues 336 to 368 (EDFHTSRQHFQQQRSISTDSRKSRRPYEMDEMG). Positions 343–353 (QHFQQQRSIST) are enriched in polar residues. A compositionally biased stretch (basic and acidic residues) spans 354 to 368 (DSRKSRRPYEMDEMG). The chain crosses the membrane as a helical span at residues 405 to 425 (IWTQVLAALSVSLGSLVVGFV). At 426 to 452 (SAYTSPALVSMTNRNMTSFEVTPQAAS) the chain is on the extracellular side. Asn440 is a glycosylation site (N-linked (GlcNAc...) asparagine). The helical transmembrane segment at 453 to 473 (WVGGIMPLAGLAGGIAGGPFI) threads the bilayer. The Cytoplasmic segment spans residues 474-485 (EYLGRRNTILAT). Residues 486-506 (AIPFIVSSLLIACAVNVAMVL) form a helical membrane-spanning segment. Topologically, residues 507–509 (AGR) are extracellular. Residues 510–530 (FLAGFCVGIASLSLPVYLGET) form a helical membrane-spanning segment. Over 531 to 536 (VQPEVR) the chain is Cytoplasmic. The helical transmembrane segment at 537–557 (GTLGLLPTAFGNIGILLCFVA) threads the bilayer. The Extracellular segment spans residues 558 to 564 (GTYMDWS). A helical membrane pass occupies residues 565–585 (MLAFLGAALPVPFLILMFLIP). At 586–654 (ETPRWFVSRG…NLKPLSISLG (69 aa)) the chain is on the cytoplasmic side. Residues 655–675 (LMFFQQLSGINAVIFYTVSIF) traverse the membrane as a helical segment. The Extracellular portion of the chain corresponds to 676-685 (KDAGSTIDGN). The chain crosses the membrane as a helical span at residues 686 to 706 (LCTIIVGIVNFMATFIATLLI). The Cytoplasmic segment spans residues 707–712 (DRAGRK). Residues 713-733 (ILLYVSNIAMIITLFVLGGFF) traverse the membrane as a helical segment. At 734 to 752 (YCKSHGQDVSQLGWLPLSC) the chain is on the extracellular side. Residues 753 to 773 (FVIYILGFSLGFGPIPWLMMG) traverse the membrane as a helical segment. The Cytoplasmic segment spans residues 774-779 (EILPSK). A helical membrane pass occupies residues 780–800 (IRGSAASVATAFNWSCTFVVT). The Extracellular segment spans residues 801 to 813 (KTFQDMIDFMGAH). The helical transmembrane segment at 814 to 834 (GAFWLFGSICFIGLFFVILYV) threads the bilayer. The Cytoplasmic portion of the chain corresponds to 835 to 869 (PETQGKTLEDIERKMMGRVRRMSSVANMKPLAFNM). 2 positions are modified to phosphoserine: Ser857 and Ser858.

The protein belongs to the major facilitator superfamily. Sugar transporter (TC 2.A.1.1) family. Trehalose transporter subfamily.

The protein localises to the cell membrane. In terms of biological role, low-capacity facilitative transporter for trehalose. Does not transport maltose, sucrose or lactose. Mediates the bidirectional transfer of trehalose. Responsible for the transport of trehalose synthesized in the fat body and the incorporation of trehalose into other tissues that require a carbon source, thereby regulating trehalose levels in the hemolymph. The sequence is that of Facilitated trehalose transporter Tret1 from Drosophila persimilis (Fruit fly).